A 517-amino-acid chain; its full sequence is Perilipin-1 (517 aa).

Phosphoserine is present on Ser81. Thr85 is subject to Phosphothreonine. Phosphoserine is present on residues Ser126, Ser130, Ser132, Ser137, and Ser174. The tract at residues 197–217 is disordered; sequence VESAPSSGRQKTQKAPKAKPS. Residues Thr224, Thr299, and Thr301 each carry the phosphothreonine modification. The tract at residues 285 to 321 is disordered; it reads HNLAASKDENHEDQTDTEGEETDEEEEEEESEAEENV. A required for interaction with CIDEC region spans residues 291–322; the sequence is KDENHEDQTDTEGEETDEEEEEEESEAEENVL. Residues 299 to 319 are compositionally biased toward acidic residues; sequence TDTEGEETDEEEEEEESEAEE. Phosphoserine occurs at positions 315, 385, 387, 408, 411, 434, 436, 440, 460, 492, and 494. The segment at 415-495 is disordered; it reads PESEFQDIDN…KPARRVSDSF (81 aa). Positions 483–492 are enriched in basic and acidic residues; that stretch reads PREKPARRVS.

Belongs to the perilipin family. Interacts with ABHD5. Interacts with CIDEC. Interacts with AQP7. Major cAMP-dependent protein kinase substrate in adipocytes, also dephosphorylated by PP1. When phosphorylated, may be maximally sensitive to HSL. When unphosphorylated, may play a role in the inhibition of lipolysis, by acting as a barrier in lipid droplet. Post-translationally, the N-terminus is blocked. In terms of tissue distribution, adipocytes.

Its subcellular location is the endoplasmic reticulum. The protein resides in the lipid droplet. Functionally, modulator of adipocyte lipid metabolism. Coats lipid storage droplets to protect them from breakdown by hormone-sensitive lipase (HSL). Its absence may result in leanness. Plays a role in unilocular lipid droplet formation by activating CIDEC. Their interaction promotes lipid droplet enlargement and directional net neutral lipid transfer. May modulate lipolysis and triglyceride levels. This Rattus norvegicus (Rat) protein is Perilipin-1 (Plin1).